The primary structure comprises 450 residues: uncharacterized protein (450 aa).

Helical transmembrane passes span 10–30, 53–73, 95–115, 120–140, 148–168, 199–219, 242–262, 267–287, 302–322, 343–363, 378–398, and 428–448; these read IIVL…LVIA, LGGG…AIAI, TAGN…LFAI, LLPV…SIFN, AVAC…PVGF, LAML…IFIT, IANI…ATFA, TSST…CGIF, LMAM…VINA, IAAL…GSSF, LSFG…AALG, and VVPT…IAAM.

It is found in the cell membrane. This is an uncharacterized protein from Haemophilus influenzae (strain ATCC 51907 / DSM 11121 / KW20 / Rd).